A 265-amino-acid chain; its full sequence is Glutamate racemase (265 aa).

Residues 7-8 (DS) and 39-40 (YG) contribute to the substrate site. Catalysis depends on Cys-71, which acts as the Proton donor/acceptor. 72-73 (NT) contacts substrate. Catalysis depends on Cys-184, which acts as the Proton donor/acceptor. A substrate-binding site is contributed by 185–186 (TH).

The protein belongs to the aspartate/glutamate racemases family.

The enzyme catalyses L-glutamate = D-glutamate. The protein operates within cell wall biogenesis; peptidoglycan biosynthesis. Its function is as follows. Provides the (R)-glutamate required for cell wall biosynthesis. The protein is Glutamate racemase of Sulfurovum sp. (strain NBC37-1).